We begin with the raw amino-acid sequence, 249 residues long: uncharacterized protein (249 aa).

Residues 3–23 (WYWIGLLIVVVLFLLSAVRIV) form a helical membrane-spanning segment.

It belongs to the band 7/mec-2 family.

It localises to the membrane. This is an uncharacterized protein from Archaeoglobus fulgidus (strain ATCC 49558 / DSM 4304 / JCM 9628 / NBRC 100126 / VC-16).